Here is a 491-residue protein sequence, read N- to C-terminus: Keratin, type I cytoskeletal 39 (491 aa).

The segment at M1 to E96 is head. The IF rod domain occupies E96–R407. The coil 1A stretch occupies residues K97–E131. The interval S132–D142 is linker 1. The segment at Y143–C243 is coil 1B. The segment at Q244–A259 is linker 12. Residues D260 to S403 form a coil 2 region. Positions D404–V491 are tail.

It belongs to the intermediate filament family. As to quaternary structure, heterotetramer of two type I and two type II keratins. As to expression, expressed in skin and scalp. In the hair follicle, it is present in the upper hair cuticle and the upper cortex. Also present in the in the upper portion of beard hairs (at protein level).

Functionally, may play a role in late hair differentiation. The chain is Keratin, type I cytoskeletal 39 (KRT39) from Homo sapiens (Human).